Reading from the N-terminus, the 139-residue chain is ATP synthase epsilon chain (139 aa).

This sequence belongs to the ATPase epsilon chain family. In terms of assembly, F-type ATPases have 2 components, CF(1) - the catalytic core - and CF(0) - the membrane proton channel. CF(1) has five subunits: alpha(3), beta(3), gamma(1), delta(1), epsilon(1). CF(0) has three main subunits: a, b and c.

The protein localises to the cell membrane. Functionally, produces ATP from ADP in the presence of a proton gradient across the membrane. This chain is ATP synthase epsilon chain, found in Levilactobacillus brevis (strain ATCC 367 / BCRC 12310 / CIP 105137 / JCM 1170 / LMG 11437 / NCIMB 947 / NCTC 947) (Lactobacillus brevis).